The primary structure comprises 119 residues: Large ribosomal subunit protein uL18 (119 aa).

This sequence belongs to the universal ribosomal protein uL18 family. In terms of assembly, part of the 50S ribosomal subunit; part of the 5S rRNA/L5/L18/L25 subcomplex. Contacts the 5S and 23S rRNAs.

Its function is as follows. This is one of the proteins that bind and probably mediate the attachment of the 5S RNA into the large ribosomal subunit, where it forms part of the central protuberance. The polypeptide is Large ribosomal subunit protein uL18 (Xanthomonas campestris pv. campestris (strain 8004)).